A 382-amino-acid chain; its full sequence is Chaperone protein DnaJ 2 (382 aa).

The J domain maps to 4 to 68 (DYYGLLGVSK…DKRRIVDLGG (65 aa)). The segment at 132–214 (GVTKQVTVDT…CMGDGRIRAR (83 aa)) adopts a CR-type zinc-finger fold. Cys-145, Cys-148, Cys-162, Cys-165, Cys-188, Cys-191, Cys-202, and Cys-205 together coordinate Zn(2+). CXXCXGXG motif repeat units follow at residues 145-152 (CDRCQGKG), 162-169 (CDTCGGRG), 188-195 (CPTCRGVG), and 202-209 (CQQCMGDG).

It belongs to the DnaJ family. Homodimer. Interacts with RNase J. Zn(2+) is required as a cofactor.

The protein localises to the cytoplasm. Participates actively in the response to hyperosmotic and heat shock by preventing the aggregation of stress-denatured proteins and by disaggregating proteins, also in an autonomous, DnaK-independent fashion. Unfolded proteins bind initially to DnaJ; upon interaction with the DnaJ-bound protein, DnaK hydrolyzes its bound ATP, resulting in the formation of a stable complex. GrpE releases ADP from DnaK; ATP binding to DnaK triggers the release of the substrate protein, thus completing the reaction cycle. Several rounds of ATP-dependent interactions between DnaJ, DnaK and GrpE are required for fully efficient folding. Also involved, together with DnaK and GrpE, in the DNA replication of plasmids through activation of initiation proteins. Inhibits the beta-lactamase and RNase activity of RNase J. In Mycobacterium tuberculosis (strain ATCC 25618 / H37Rv), this protein is Chaperone protein DnaJ 2.